The sequence spans 22 residues: Brevinin-1OKd (22 aa).

K22 carries the lysine amide modification.

In terms of tissue distribution, expressed by the skin glands.

Its subcellular location is the secreted. In terms of biological role, antimicrobial peptide. In Nidirana okinavana (Kampira Falls frog), this protein is Brevinin-1OKd.